Reading from the N-terminus, the 63-residue chain is Overexpressed in colon carcinoma 1 protein homolog (63 aa).

A compositionally biased stretch (polar residues) spans 1 to 10; it reads MGCGNSTATS. A disordered region spans residues 1–39; that stretch reads MGCGNSTATSAAAGRGPTGAVKDTTEDSITEDDKRRNYG.

This sequence belongs to the OCC1 family.

This Mus musculus (Mouse) protein is Overexpressed in colon carcinoma 1 protein homolog.